The following is a 198-amino-acid chain: Holliday junction branch migration complex subunit RuvA (198 aa).

A domain I region spans residues 1–61 (MILYRIGEII…EYQYATYAFK (61 aa)). Positions 62-139 (DFKERLLFVD…KMISPKDAAK (78 aa)) are domain II. The tract at residues 140–144 (INETT) is flexible linker. Residues 144 to 198 (TNTLSEVKETLKMVGFKTKQIDGALSKISSTDDVEKMIEEAIKLMSTQNYESATA) are domain III.

The protein belongs to the RuvA family. In terms of assembly, homotetramer. Forms an RuvA(8)-RuvB(12)-Holliday junction (HJ) complex. HJ DNA is sandwiched between 2 RuvA tetramers; dsDNA enters through RuvA and exits via RuvB. An RuvB hexamer assembles on each DNA strand where it exits the tetramer. Each RuvB hexamer is contacted by two RuvA subunits (via domain III) on 2 adjacent RuvB subunits; this complex drives branch migration. In the full resolvosome a probable DNA-RuvA(4)-RuvB(12)-RuvC(2) complex forms which resolves the HJ.

Its subcellular location is the cytoplasm. Functionally, the RuvA-RuvB-RuvC complex processes Holliday junction (HJ) DNA during genetic recombination and DNA repair, while the RuvA-RuvB complex plays an important role in the rescue of blocked DNA replication forks via replication fork reversal (RFR). RuvA specifically binds to HJ cruciform DNA, conferring on it an open structure. The RuvB hexamer acts as an ATP-dependent pump, pulling dsDNA into and through the RuvAB complex. HJ branch migration allows RuvC to scan DNA until it finds its consensus sequence, where it cleaves and resolves the cruciform DNA. This Mycoplasmopsis agalactiae (strain NCTC 10123 / CIP 59.7 / PG2) (Mycoplasma agalactiae) protein is Holliday junction branch migration complex subunit RuvA.